A 102-amino-acid chain; its full sequence is Hypersensitivity to hygromycin-B protein 1 (102 aa).

The first 17 residues, Met-1–Ser-17, serve as a signal peptide directing secretion. The chain crosses the membrane as a helical span at residues Ser-18–Pro-38. At His-39–Lys-69 the chain is on the cytoplasmic side. A helical membrane pass occupies residues Leu-70–Val-90. Topologically, residues Ser-91–Ser-102 are extracellular.

The protein localises to the membrane. Functionally, involved in vacuolar trafficking. This Saccharomyces cerevisiae (strain ATCC 204508 / S288c) (Baker's yeast) protein is Hypersensitivity to hygromycin-B protein 1.